A 184-amino-acid polypeptide reads, in one-letter code: Ribulose bisphosphate carboxylase small subunit, chloroplastic 5 (184 aa).

Residues 1–43 (MAAAMMNKTIVVSKDGCARSSSIPKVATNKMGFASAVAMKKSR) constitute a chloroplast transit peptide.

Belongs to the RuBisCO small chain family. As to quaternary structure, heterohexadecamer of 8 large and 8 small subunits.

Its subcellular location is the plastid. It is found in the chloroplast. Functionally, ruBisCO catalyzes two reactions: the carboxylation of D-ribulose 1,5-bisphosphate, the primary event in carbon dioxide fixation, as well as the oxidative fragmentation of the pentose substrate. Both reactions occur simultaneously and in competition at the same active site. Although the small subunit is not catalytic it is essential for maximal activity. This chain is Ribulose bisphosphate carboxylase small subunit, chloroplastic 5, found in Acetabularia peniculus (Green alga).